We begin with the raw amino-acid sequence, 641 residues long: DNA primase (641 aa).

A CHC2-type zinc finger spans residues 41–65; that stretch reads CPFHDEKSPSFQVSPSKGFFHCFGC. Residues 262–346 enclose the Toprim domain; sequence SRAVVVEGYT…AAETYIAIAP (85 aa). Mg(2+) is bound by residues E268, D317, and D319. Residues 444-478 form a disordered region; the sequence is RDRGGKGPAPDQRQRGGGPQQQAGPMTATPRGPAL.

It belongs to the DnaG primase family. In terms of assembly, monomer. Interacts with DnaB. Zn(2+) is required as a cofactor. Mg(2+) serves as cofactor.

It carries out the reaction ssDNA + n NTP = ssDNA/pppN(pN)n-1 hybrid + (n-1) diphosphate.. In terms of biological role, RNA polymerase that catalyzes the synthesis of short RNA molecules used as primers for DNA polymerase during DNA replication. The chain is DNA primase from Streptomyces coelicolor (strain ATCC BAA-471 / A3(2) / M145).